Consider the following 128-residue polypeptide: uncharacterized protein (128 aa).

A run of 3 helical transmembrane segments spans residues 19–41 (MAIV…YVGS), 54–71 (LTFL…SIMQ), and 75–97 (PLIA…VDNL).

The protein resides in the cell membrane. This is an uncharacterized protein from Pasteurella multocida (strain Pm70).